The following is a 106-amino-acid chain: BLOC-1-related complex subunit 7 (106 aa).

It belongs to the BORCS7 family. Component of the BLOC-one-related complex (BORC) which is composed of BLOC1S1, BLOC1S2, BORCS5, BORCS6, BORCS7, BORCS8, KXD1 and SNAPIN.

Its subcellular location is the lysosome membrane. Its function is as follows. As part of the BORC complex may play a role in lysosomes movement and localization at the cell periphery. Associated with the cytosolic face of lysosomes, the BORC complex may recruit ARL8B and couple lysosomes to microtubule plus-end-directed kinesin motor. This chain is BLOC-1-related complex subunit 7, found in Pongo abelii (Sumatran orangutan).